The chain runs to 80 residues: Serine protease inhibitor Kazal-type 6 (80 aa).

The first 23 residues, 1 to 23 (MKTSGVFLLLSLALFCFFSGVFG), serve as a signal peptide directing secretion. Glutamine 24 carries the post-translational modification Pyrrolidone carboxylic acid. A Kazal-like domain is found at 24-80 (QGAQVDCAEFKDPKVYCTRESNPHCGSDGQTYGNKCAFCKAVMKSGGKINLKHRGKC). 3 cysteine pairs are disulfide-bonded: cysteine 30–cysteine 62, cysteine 40–cysteine 59, and cysteine 48–cysteine 80.

In terms of tissue distribution, seminal plasma.

It localises to the secreted. Serine protease inhibitor selective for kallikreins. Efficiently inhibits KLK4, KLK5, KLK6, KLK7, KLK12, KLK13 and KLK14. Doesn't inhibit KLK8. Inhibits acrosin, trypsin, and chymotrypsin. The polypeptide is Serine protease inhibitor Kazal-type 6 (SPINK6) (Bos taurus (Bovine)).